We begin with the raw amino-acid sequence, 363 residues long: Lovastatin nonaketide synthase, enoyl reductase component lovC (363 aa).

NADP(+)-binding positions include 51–54 (SDTK), 174–177 (STAT), 197–200 (SPHN), Tyr215, 262–263 (LN), Thr280, and 351–352 (LS). Positions 226 to 272 (TYTKNNLRYALDCITNVESTTFCFAAIGRAGGHYVSLNPFPEHAATR) are lovB-binding.

The protein belongs to the zinc-containing alcohol dehydrogenase family. In terms of assembly, each MAT domain from the lovB homodimer binds one lovC molecule to form the final active lovB-lovC megasynthase complex.

The enzyme catalyses holo-[lovastatin nonaketide synthase] + 9 malonyl-CoA + S-adenosyl-L-methionine + 11 NADPH + 19 H(+) = dihydromonacolin L-[lovastatin nonaketide synthase] + S-adenosyl-L-homocysteine + 9 CO2 + 11 NADP(+) + 9 CoA + 6 H2O. It functions in the pathway polyketide biosynthesis; lovastatin biosynthesis. In terms of biological role, trans-enoyl reductase; part of the gene cluster that mediates the biosynthesis of lovastatin (also known as mevinolin, mevacor or monacolin K), a hypolipidemic inhibitor of (3S)-hydroxymethylglutaryl-coenzyme A (HMG-CoA) reductase (HMGR). The first step in the biosynthesis of lovastatin is the production of dihydromonacolin L acid (DML) by the lovastatin nonaketide synthase lovB and the trans-acting enoyl reductase lovC (called the lovB-lovC megasynthase complex) via condensation of one acetyl-CoA unit and 8 malonyl-CoA units. The formation of the LovB/C complex is essential for the integrity of the catalytic chamber to the complete total synthesis of DML acid. Dihydromonacolin L acid is released from lovB by the thioesterase lovG. Next, dihydromonacolin L acid is oxidized by the dihydromonacolin L monooxygenase lovA twice to form monacolin J acid. The 2-methylbutyrate moiety of lovastatin is synthesized by the lovastatin diketide synthase lovF via condensation of one acetyl-CoA unit and one malonyl-CoA unit. Finally, the covalent attachment of this moiety to monacolin J acid is catalyzed by the transesterase lovD to yield lovastatin. LovD has broad substrate specificity and can also convert monacolin J to simvastatin using alpha-dimethylbutanoyl-S-methyl-3-mercaptopropionate (DMB-S-MMP) as the thioester acyl donor, and can also catalyze the reverse reaction and function as hydrolase in vitro. LovD has much higher activity with LovF-bound 2-methylbutanoate than with free diketide substrates. In Aspergillus terreus, this protein is Lovastatin nonaketide synthase, enoyl reductase component lovC.